Consider the following 967-residue polypeptide: Phosphatidylserine decarboxylase proenzyme 3 (967 aa).

The tract at residues 217–255 (FIAEPDSSIPPSESSVSISTDTGKETPPSKSKKSSNQPY) is disordered. A compositionally biased stretch (low complexity) spans 220–237 (EPDSSIPPSESSVSISTD). In terms of domain architecture, C2 spans 250 to 373 (SSNQPYVSIG…SSAQVDPETG (124 aa)). The Ca(2+) site is built by Asp343, Ser346, and Asp349. Residues 532–544 (DQQATQTPQSPSS) are compositionally biased toward low complexity. The segment at 532–566 (DQQATQTPQSPSSNEESGPGTPTQTSDQYEDSEDS) is disordered. A compositionally biased stretch (polar residues) spans 545–558 (NEESGPGTPTQTSD). Residues Asp769, His825, and Ser912 each act as charge relay system; for autoendoproteolytic cleavage activity in the active site. The Schiff-base intermediate with substrate; via pyruvic acid; for decarboxylase activity role is filled by Ser912. Ser912 is subject to Pyruvic acid (Ser); by autocatalysis. Positions 947 to 967 (IGQKIDPNKPTDAEDHSKSDS) are disordered.

The protein belongs to the phosphatidylserine decarboxylase family. PSD-B subfamily. Eukaryotic type II sub-subfamily. Heterodimer of a large membrane-associated beta subunit and a small pyruvoyl-containing alpha subunit. Pyruvate serves as cofactor. Requires Ca(2+) as cofactor. In terms of processing, is synthesized initially as an inactive proenzyme. Formation of the active enzyme involves a self-maturation process in which the active site pyruvoyl group is generated from an internal serine residue via an autocatalytic post-translational modification. Two non-identical subunits are generated from the proenzyme in this reaction, and the pyruvate is formed at the N-terminus of the alpha chain, which is derived from the carboxyl end of the proenzyme. The autoendoproteolytic cleavage occurs by a canonical serine protease mechanism, in which the side chain hydroxyl group of the serine supplies its oxygen atom to form the C-terminus of the beta chain, while the remainder of the serine residue undergoes an oxidative deamination to produce ammonia and the pyruvoyl prosthetic group on the alpha chain. During this reaction, the Ser that is part of the protease active site of the proenzyme becomes the pyruvoyl prosthetic group, which constitutes an essential element of the active site of the mature decarboxylase.

It is found in the golgi apparatus membrane. The protein localises to the endosome membrane. The protein resides in the cytoplasm. The catalysed reaction is a 1,2-diacyl-sn-glycero-3-phospho-L-serine + H(+) = a 1,2-diacyl-sn-glycero-3-phosphoethanolamine + CO2. The protein operates within phospholipid metabolism; phosphatidylethanolamine biosynthesis; phosphatidylethanolamine from CDP-diacylglycerol: step 2/2. Catalyzes the formation of phosphatidylethanolamine (PtdEtn) from phosphatidylserine (PtdSer). Plays a central role in phospholipid metabolism and in the interorganelle trafficking of phosphatidylserine. Together with psd1 and psd2, responsible for the majority of phosphatidylethanolamine synthesis. This is Phosphatidylserine decarboxylase proenzyme 3 from Schizosaccharomyces pombe (strain 972 / ATCC 24843) (Fission yeast).